The sequence spans 264 residues: 3-deoxy-manno-octulosonate cytidylyltransferase (264 aa).

This sequence belongs to the KdsB family.

It is found in the cytoplasm. It carries out the reaction 3-deoxy-alpha-D-manno-oct-2-ulosonate + CTP = CMP-3-deoxy-beta-D-manno-octulosonate + diphosphate. It participates in nucleotide-sugar biosynthesis; CMP-3-deoxy-D-manno-octulosonate biosynthesis; CMP-3-deoxy-D-manno-octulosonate from 3-deoxy-D-manno-octulosonate and CTP: step 1/1. Its pathway is bacterial outer membrane biogenesis; lipopolysaccharide biosynthesis. Its function is as follows. Activates KDO (a required 8-carbon sugar) for incorporation into bacterial lipopolysaccharide in Gram-negative bacteria. This is 3-deoxy-manno-octulosonate cytidylyltransferase from Marinomonas sp. (strain MWYL1).